The sequence spans 130 residues: Small ribosomal subunit protein uS11c (130 aa).

This sequence belongs to the universal ribosomal protein uS11 family. Part of the 30S ribosomal subunit.

It is found in the plastid. The protein resides in the chloroplast. The polypeptide is Small ribosomal subunit protein uS11c (Pinus thunbergii (Japanese black pine)).